The sequence spans 42 residues: Photosystem II reaction center protein J (42 aa).

A helical membrane pass occupies residues 10–30 (IPLWLVGTVAGTAAIGLLGIF).

Belongs to the PsbJ family. As to quaternary structure, PSII is composed of 1 copy each of membrane proteins PsbA, PsbB, PsbC, PsbD, PsbE, PsbF, PsbH, PsbI, PsbJ, PsbK, PsbL, PsbM, PsbT, PsbX, PsbY, PsbZ, Psb30/Ycf12, at least 3 peripheral proteins of the oxygen-evolving complex and a large number of cofactors. It forms dimeric complexes.

Its subcellular location is the plastid. It is found in the chloroplast thylakoid membrane. Functionally, one of the components of the core complex of photosystem II (PSII). PSII is a light-driven water:plastoquinone oxidoreductase that uses light energy to abstract electrons from H(2)O, generating O(2) and a proton gradient subsequently used for ATP formation. It consists of a core antenna complex that captures photons, and an electron transfer chain that converts photonic excitation into a charge separation. The sequence is that of Photosystem II reaction center protein J from Pleurastrum terricola (Filamentous green alga).